The sequence spans 1595 residues: Pentafunctional AROM polypeptide (1595 aa).

The 3-dehydroquinate synthase stretch occupies residues 1-384 (MGVPTKISIL…HEPRASTVSN (384 aa)). NAD(+) is bound by residues 44 to 46 (DTN), 81 to 84 (ESSK), 114 to 116 (GGV), and Asp119. Position 130 (Arg130) interacts with 7-phospho-2-dehydro-3-deoxy-D-arabino-heptonate. 139–140 (TT) contributes to the NAD(+) binding site. Residues Asp146 and Lys152 each contribute to the 7-phospho-2-dehydro-3-deoxy-D-arabino-heptonate site. Residue Lys161 coordinates NAD(+). Residue Asn162 coordinates 7-phospho-2-dehydro-3-deoxy-D-arabino-heptonate. NAD(+)-binding positions include 179–182 (FLNT) and Asn190. Residue Glu194 participates in Zn(2+) binding. 7-phospho-2-dehydro-3-deoxy-D-arabino-heptonate is bound by residues 194–197 (EVIK) and Lys250. Glu260 functions as the Proton acceptor; for 3-dehydroquinate synthase activity in the catalytic mechanism. 7-phospho-2-dehydro-3-deoxy-D-arabino-heptonate contacts are provided by residues 264-268 (RNLLN) and His271. His271 is a Zn(2+) binding site. His275 acts as the Proton acceptor; for 3-dehydroquinate synthase activity in catalysis. Residues His287 and Lys356 each coordinate 7-phospho-2-dehydro-3-deoxy-D-arabino-heptonate. His287 serves as a coordination point for Zn(2+). Residues 397-842 (VSPGVPKGLD…WDSLAQTFKV (446 aa)) form an EPSP synthase region. Cys824 serves as the catalytic For EPSP synthase activity. The interval 866–1057 (ASIFIIGMRG…RRKENTFFVS (192 aa)) is shikimate kinase. ATP is bound at residue 872 to 879 (GMRGAGKT). The 3-dehydroquinase stretch occupies residues 1058 to 1278 (LTLPDLSLAA…AAPGQLSARE (221 aa)). His1181 serves as the catalytic Proton acceptor; for 3-dehydroquinate dehydratase activity. Catalysis depends on Lys1209, which acts as the Schiff-base intermediate with substrate; for 3-dehydroquinate dehydratase activity. The shikimate dehydrogenase stretch occupies residues 1291–1595 (AKKFAVIGNP…MGVSPSEDIL (305 aa)).

This sequence in the N-terminal section; belongs to the sugar phosphate cyclases superfamily. Dehydroquinate synthase family. In the 2nd section; belongs to the EPSP synthase family. It in the 3rd section; belongs to the shikimate kinase family. The protein in the 4th section; belongs to the type-I 3-dehydroquinase family. This sequence in the C-terminal section; belongs to the shikimate dehydrogenase family. Homodimer. It depends on Zn(2+) as a cofactor.

It is found in the cytoplasm. The enzyme catalyses 7-phospho-2-dehydro-3-deoxy-D-arabino-heptonate = 3-dehydroquinate + phosphate. It carries out the reaction 3-dehydroquinate = 3-dehydroshikimate + H2O. It catalyses the reaction shikimate + NADP(+) = 3-dehydroshikimate + NADPH + H(+). The catalysed reaction is shikimate + ATP = 3-phosphoshikimate + ADP + H(+). The enzyme catalyses 3-phosphoshikimate + phosphoenolpyruvate = 5-O-(1-carboxyvinyl)-3-phosphoshikimate + phosphate. It functions in the pathway metabolic intermediate biosynthesis; chorismate biosynthesis; chorismate from D-erythrose 4-phosphate and phosphoenolpyruvate: step 2/7. It participates in metabolic intermediate biosynthesis; chorismate biosynthesis; chorismate from D-erythrose 4-phosphate and phosphoenolpyruvate: step 3/7. The protein operates within metabolic intermediate biosynthesis; chorismate biosynthesis; chorismate from D-erythrose 4-phosphate and phosphoenolpyruvate: step 4/7. Its pathway is metabolic intermediate biosynthesis; chorismate biosynthesis; chorismate from D-erythrose 4-phosphate and phosphoenolpyruvate: step 5/7. It functions in the pathway metabolic intermediate biosynthesis; chorismate biosynthesis; chorismate from D-erythrose 4-phosphate and phosphoenolpyruvate: step 6/7. Its function is as follows. The AROM polypeptide catalyzes 5 consecutive enzymatic reactions in prechorismate polyaromatic amino acid biosynthesis. The sequence is that of Pentafunctional AROM polypeptide from Ajellomyces capsulatus (strain G186AR / H82 / ATCC MYA-2454 / RMSCC 2432) (Darling's disease fungus).